Here is a 353-residue protein sequence, read N- to C-terminus: UDP-N-acetylglucosamine--N-acetylmuramyl-(pentapeptide) pyrophosphoryl-undecaprenol N-acetylglucosamine transferase (353 aa).

Residues N123, R161, S189, I243, 262–267, and Q287 each bind UDP-N-acetyl-alpha-D-glucosamine; that span reads ALTVSE.

This sequence belongs to the glycosyltransferase 28 family. MurG subfamily.

The protein localises to the cell membrane. It carries out the reaction di-trans,octa-cis-undecaprenyl diphospho-N-acetyl-alpha-D-muramoyl-L-alanyl-D-glutamyl-meso-2,6-diaminopimeloyl-D-alanyl-D-alanine + UDP-N-acetyl-alpha-D-glucosamine = di-trans,octa-cis-undecaprenyl diphospho-[N-acetyl-alpha-D-glucosaminyl-(1-&gt;4)]-N-acetyl-alpha-D-muramoyl-L-alanyl-D-glutamyl-meso-2,6-diaminopimeloyl-D-alanyl-D-alanine + UDP + H(+). It functions in the pathway cell wall biogenesis; peptidoglycan biosynthesis. In terms of biological role, cell wall formation. Catalyzes the transfer of a GlcNAc subunit on undecaprenyl-pyrophosphoryl-MurNAc-pentapeptide (lipid intermediate I) to form undecaprenyl-pyrophosphoryl-MurNAc-(pentapeptide)GlcNAc (lipid intermediate II). In Buchnera aphidicola subsp. Baizongia pistaciae (strain Bp), this protein is UDP-N-acetylglucosamine--N-acetylmuramyl-(pentapeptide) pyrophosphoryl-undecaprenol N-acetylglucosamine transferase.